The chain runs to 414 residues: 3-phosphoshikimate 1-carboxyvinyltransferase (414 aa).

3-phosphoshikimate-binding residues include K20, S21, and R25. K20 is a phosphoenolpyruvate binding site. Residues G88 and R116 each contribute to the phosphoenolpyruvate site. 3-phosphoshikimate is bound by residues T157, S158, Q159, S183, D297, and K324. Q159 contributes to the phosphoenolpyruvate binding site. The active-site Proton acceptor is the D297. Phosphoenolpyruvate contacts are provided by R328, R369, and K395.

The protein belongs to the EPSP synthase family. Monomer.

It is found in the cytoplasm. The catalysed reaction is 3-phosphoshikimate + phosphoenolpyruvate = 5-O-(1-carboxyvinyl)-3-phosphoshikimate + phosphate. Its pathway is metabolic intermediate biosynthesis; chorismate biosynthesis. In terms of biological role, catalyzes the transfer of the enolpyruvyl moiety of phosphoenolpyruvate (PEP) to the 5-hydroxyl of shikimate-3-phosphate (S3P) to produce enolpyruvyl shikimate-3-phosphate and inorganic phosphate. The protein is 3-phosphoshikimate 1-carboxyvinyltransferase of Caldivirga maquilingensis (strain ATCC 700844 / DSM 13496 / JCM 10307 / IC-167).